Consider the following 411-residue polypeptide: Arginine deiminase (411 aa).

Residue Cys401 is the Amidino-cysteine intermediate of the active site.

It belongs to the arginine deiminase family.

It localises to the cytoplasm. The enzyme catalyses L-arginine + H2O = L-citrulline + NH4(+). It functions in the pathway amino-acid degradation; L-arginine degradation via ADI pathway; carbamoyl phosphate from L-arginine: step 1/2. In Streptococcus equi subsp. equi (strain 4047), this protein is Arginine deiminase.